The primary structure comprises 287 residues: Phosphatidylglycerol--prolipoprotein diacylglyceryl transferase (287 aa).

Helical transmembrane passes span 15–35 (IGPL…ILAI), 55–75 (FVMF…VFFE), 90–110 (IWEG…TAIV), and 117–137 (VSFW…QAIG). A 1,2-diacyl-sn-glycero-3-phospho-(1'-sn-glycerol) is bound at residue Arg-138. The next 2 membrane-spanning stretches (helical) occupy residues 180-200 (HPTF…LLLL) and 238-258 (IIRT…IFII).

This sequence belongs to the Lgt family.

Its subcellular location is the cell membrane. The enzyme catalyses L-cysteinyl-[prolipoprotein] + a 1,2-diacyl-sn-glycero-3-phospho-(1'-sn-glycerol) = an S-1,2-diacyl-sn-glyceryl-L-cysteinyl-[prolipoprotein] + sn-glycerol 1-phosphate + H(+). It functions in the pathway protein modification; lipoprotein biosynthesis (diacylglyceryl transfer). Its function is as follows. Catalyzes the transfer of the diacylglyceryl group from phosphatidylglycerol to the sulfhydryl group of the N-terminal cysteine of a prolipoprotein, the first step in the formation of mature lipoproteins. The chain is Phosphatidylglycerol--prolipoprotein diacylglyceryl transferase from Oceanobacillus iheyensis (strain DSM 14371 / CIP 107618 / JCM 11309 / KCTC 3954 / HTE831).